We begin with the raw amino-acid sequence, 189 residues long: GMP synthase [glutamine-hydrolyzing] subunit A (189 aa).

Positions 5–189 (KILVVNNYGQ…MNFFEVCDLY (185 aa)) constitute a Glutamine amidotransferase type-1 domain. The Nucleophile role is filled by C79. Residues H166 and E168 contribute to the active site.

As to quaternary structure, heterodimer composed of a glutamine amidotransferase subunit (A) and a GMP-binding subunit (B).

The catalysed reaction is XMP + L-glutamine + ATP + H2O = GMP + L-glutamate + AMP + diphosphate + 2 H(+). It participates in purine metabolism; GMP biosynthesis; GMP from XMP (L-Gln route): step 1/1. Functionally, catalyzes the synthesis of GMP from XMP. This chain is GMP synthase [glutamine-hydrolyzing] subunit A, found in Methanosarcina mazei (strain ATCC BAA-159 / DSM 3647 / Goe1 / Go1 / JCM 11833 / OCM 88) (Methanosarcina frisia).